The chain runs to 412 residues: ATP phosphoribosyltransferase regulatory subunit (412 aa).

This sequence belongs to the class-II aminoacyl-tRNA synthetase family. HisZ subfamily. As to quaternary structure, heteromultimer composed of HisG and HisZ subunits.

It localises to the cytoplasm. The protein operates within amino-acid biosynthesis; L-histidine biosynthesis; L-histidine from 5-phospho-alpha-D-ribose 1-diphosphate: step 1/9. Functionally, required for the first step of histidine biosynthesis. May allow the feedback regulation of ATP phosphoribosyltransferase activity by histidine. In Dehalococcoides mccartyi (strain ATCC BAA-2266 / KCTC 15142 / 195) (Dehalococcoides ethenogenes (strain 195)), this protein is ATP phosphoribosyltransferase regulatory subunit.